The following is a 284-amino-acid chain: L-ribulose-5-phosphate 3-epimerase UlaE (284 aa).

It belongs to the L-ribulose-5-phosphate 3-epimerase family.

The enzyme catalyses L-ribulose 5-phosphate = L-xylulose 5-phosphate. It functions in the pathway cofactor degradation; L-ascorbate degradation; D-xylulose 5-phosphate from L-ascorbate: step 3/4. Functionally, catalyzes the isomerization of L-xylulose-5-phosphate to L-ribulose-5-phosphate. Is involved in the anaerobic L-ascorbate utilization. This is L-ribulose-5-phosphate 3-epimerase UlaE from Escherichia coli O139:H28 (strain E24377A / ETEC).